A 223-amino-acid polypeptide reads, in one-letter code: Ribonuclease 3 (223 aa).

Residues 1–131 (MDGVDELLLR…LIGAVMVDQG (131 aa)) enclose the RNase III domain. Residue Glu44 participates in Mg(2+) binding. Asp48 is a catalytic residue. 2 residues coordinate Mg(2+): Asp117 and Glu120. Glu120 is an active-site residue. Residues 157–220 (DPKTKLQKLT…AMSALASLEN (64 aa)) form the DRBM domain.

The protein belongs to the ribonuclease III family. In terms of assembly, homodimer. Requires Mg(2+) as cofactor.

The protein resides in the cytoplasm. It catalyses the reaction Endonucleolytic cleavage to 5'-phosphomonoester.. In terms of biological role, digests double-stranded RNA. Involved in the processing of primary rRNA transcript to yield the immediate precursors to the large and small rRNAs (23S and 16S). Processes some mRNAs, and tRNAs when they are encoded in the rRNA operon. Processes pre-crRNA and tracrRNA of type II CRISPR loci if present in the organism. This chain is Ribonuclease 3, found in Tropheryma whipplei (strain Twist) (Whipple's bacillus).